Here is a 301-residue protein sequence, read N- to C-terminus: 3-methyl-2-oxobutanoate hydroxymethyltransferase (301 aa).

Positions 1–12 (MAPSNLPESTTP) are enriched in polar residues. The interval 1–24 (MAPSNLPESTTPAEVPAPYGTGPA) is disordered. The Mg(2+) site is built by Asp-82 and Asp-121. 3-methyl-2-oxobutanoate-binding positions include 82 to 83 (DS), Asp-121, and Lys-151. Glu-153 lines the Mg(2+) pocket. Glu-219 serves as the catalytic Proton acceptor.

Belongs to the PanB family. Homodecamer; pentamer of dimers. Mg(2+) is required as a cofactor.

Its subcellular location is the cytoplasm. It catalyses the reaction 3-methyl-2-oxobutanoate + (6R)-5,10-methylene-5,6,7,8-tetrahydrofolate + H2O = 2-dehydropantoate + (6S)-5,6,7,8-tetrahydrofolate. It functions in the pathway cofactor biosynthesis; (R)-pantothenate biosynthesis; (R)-pantoate from 3-methyl-2-oxobutanoate: step 1/2. Functionally, catalyzes the reversible reaction in which hydroxymethyl group from 5,10-methylenetetrahydrofolate is transferred onto alpha-ketoisovalerate to form ketopantoate. In Paenarthrobacter aurescens (strain TC1), this protein is 3-methyl-2-oxobutanoate hydroxymethyltransferase.